The chain runs to 206 residues: Small ribosomal subunit protein uS4 (206 aa).

Residues 96–156 (CRLDNVVYRM…EKSLNQLRIV (61 aa)) form the S4 RNA-binding domain.

It belongs to the universal ribosomal protein uS4 family. As to quaternary structure, part of the 30S ribosomal subunit. Contacts protein S5. The interaction surface between S4 and S5 is involved in control of translational fidelity.

In terms of biological role, one of the primary rRNA binding proteins, it binds directly to 16S rRNA where it nucleates assembly of the body of the 30S subunit. Functionally, with S5 and S12 plays an important role in translational accuracy. The protein is Small ribosomal subunit protein uS4 of Pseudomonas entomophila (strain L48).